Here is a 31-residue protein sequence, read N- to C-terminus: Cytochrome b6-f complex subunit 6 (31 aa).

The chain crosses the membrane as a helical span at residues 4 to 24 (ITSYFGFLLAALTITSALFIG).

Belongs to the PetL family. In terms of assembly, the 4 large subunits of the cytochrome b6-f complex are cytochrome b6, subunit IV (17 kDa polypeptide, PetD), cytochrome f and the Rieske protein, while the 4 small subunits are PetG, PetL, PetM and PetN. The complex functions as a dimer.

It localises to the plastid. Its subcellular location is the chloroplast thylakoid membrane. Component of the cytochrome b6-f complex, which mediates electron transfer between photosystem II (PSII) and photosystem I (PSI), cyclic electron flow around PSI, and state transitions. PetL is important for photoautotrophic growth as well as for electron transfer efficiency and stability of the cytochrome b6-f complex. In Gossypium hirsutum (Upland cotton), this protein is Cytochrome b6-f complex subunit 6.